A 238-amino-acid chain; its full sequence is Carboxymethylenebutenolidase (238 aa).

Residues cysteine 123, aspartate 171, and histidine 201 contribute to the active site.

It belongs to the dienelactone hydrolase family. As to quaternary structure, monomer.

It carries out the reaction 2-(5-oxo-2,5-dihydrofuran-2-ylidene)acetate + H2O = 4-oxohex-2-enedioate + H(+). The protein operates within aromatic compound metabolism; 3-chlorocatechol degradation. In terms of biological role, ring cleavage of cyclic ester dienelactone to produce maleylacetate. The polypeptide is Carboxymethylenebutenolidase (tcbE) (Pseudomonas sp. (strain P51)).